We begin with the raw amino-acid sequence, 352 residues long: Schlafen-like protein 4 (352 aa).

An SLFN-like fold region spans residues 87–235; the sequence is FEYQSNFSEV…SDKVYQISSG (149 aa). Residues 326–343 form a helical membrane-spanning segment; sequence IQNIGWIFFGTALSCCIY.

This sequence belongs to the Schlafen family. Component of the PUCH (precursor of 21U RNA 5'-end cleavage holoenzyme) complex; consisting of tofu-1, tofu-2 and either slfl-3 or slfl-4.

The protein resides in the membrane. In terms of biological role, component of the trimeric PUCH (precursor of 21U RNA 5'-end cleavage holoenzyme) complex, that acts as an endoribonuclease processing the 5'-end of precursor Piwi-interacting RNAs (piRNAs). The PUCH complex consists of tofu-1, tofu-2 and either slfl-3 or slfl-4, where tofu-2 exhibits endoribonuclease activity. PUCH-mediated processing strictly requires a 7-methyl-G cap (m7 G-cap) and an uracil at position three (U3). PUCH also exhibits a strict bias for piRNA precursors with an A or G at position 1. Mature piRNA production is enhanced by the interaction of PUCH with the PETISCO complex, which is stabilizing piRNA precursors and allows their processing by PUCH. This Caenorhabditis elegans protein is Schlafen-like protein 4.